The chain runs to 796 residues: Nuclear GTPase SLIP-GC (796 aa).

Residues 1-22 (MAETKDVFGQEPHPVEDDLYKE) show a composition bias toward basic and acidic residues. The segment at 1–35 (MAETKDVFGQEPHPVEDDLYKERTRKRRKSDRDQR) is disordered. Residue 107-114 (GSTGAGKS) participates in GTP binding. Coiled coils occupy residues 158–185 (SDQE…EEAD) and 745–775 (KELA…RLRK).

Expressed in germinal center B-cell and in lymphomas derived from germinal center B-cell.

The protein localises to the nucleus speckle. Nuclear GTPase found in germinal center B-cells, where it may inhibit function of the activation-induced cytidine deaminase AICDA. Reduces somatic hypermutation in B-cells which may enhance genome stability. This is Nuclear GTPase SLIP-GC (NUGGC) from Homo sapiens (Human).